The sequence spans 432 residues: Septin-14 (432 aa).

The region spanning 49 to 315 (QGFTFNILCV…ECYRYQKLQK (267 aa)) is the Septin-type G domain. The segment at 59 to 66 (GETGIGKS) is G1 motif. GTP is bound by residues 59–66 (GETGIGKS), Gly-114, 195–203 (KADTISKND), Gly-249, and Arg-264. The segment at 111–114 (ETVG) is G3 motif. Residues 194–197 (AKAD) are G4 motif. Residues 332 to 412 (EIFEAKRQEF…IIDFYKMKAA (81 aa)) adopt a coiled-coil conformation. Positions 369–432 (EAEKELQDKF…DTKKDKHRKK (64 aa)) are required for interaction with SEPTIN4. Required for migration of cortical neurons during corticogenesis.

This sequence belongs to the TRAFAC class TrmE-Era-EngA-EngB-Septin-like GTPase superfamily. Septin GTPase family. Septins polymerize into heterooligomeric protein complexes that form filaments, and can associate with cellular membranes, actin filaments and microtubules. GTPase activity is required for filament formation. Interacts with ACTN4. Interacts with SEPTIN9. Interacts (via C-terminus) with SEPTIN4. As to expression, testis-specific (at protein level).

It localises to the cytoplasm. Its subcellular location is the cytoskeleton. The protein resides in the cell projection. The protein localises to the axon. It is found in the dendrite. It localises to the perikaryon. Its subcellular location is the perinuclear region. The protein resides in the cytoplasmic vesicle. The protein localises to the secretory vesicle. It is found in the acrosome. Filament-forming cytoskeletal GTPase. Involved in the migration of cortical neurons and the formation of neuron leading processes during embryonic development. Plays a role in sperm head formation during spermiogenesis, potentially via facilitating localization of ACTN4 to cell filaments. This chain is Septin-14, found in Homo sapiens (Human).